Here is an 866-residue protein sequence, read N- to C-terminus: Protein SEY1 (866 aa).

Residues 1 to 746 are Cytoplasmic-facing; sequence MVSNGHFAYA…KRSAIGGMTQ (746 aa). The region spanning 48-305 is the GB1/RHD3-type G domain; the sequence is GFNYHLISVF…IPADGFAVYA (258 aa). Residue 58–65 coordinates GTP; that stretch reads GSQSTGKS. Residues 480-506 are a coiled coil; it reads SNYTQELALYQKDLEKISAQLRKDEMR. The chain crosses the membrane as a helical span at residues 747 to 767; sequence IPVYFYILLLALGWNEIIAVL. At 768–770 the chain is on the lumenal side; it reads RNP. Residues 771 to 791 traverse the membrane as a helical segment; sequence VYFFMLFLCSVAAYIIYQLNL. Residues 792-866 lie on the Cytoplasmic side of the membrane; it reads WGPMVKMAEA…DDEVEGEETW (75 aa). A disordered region spans residues 840 to 866; sequence SHVRSGRNATKINERDDDDEVEGEETW. Acidic residues predominate over residues 854-866; it reads RDDDDEVEGEETW.

The protein belongs to the TRAFAC class dynamin-like GTPase superfamily. GB1/RHD3 GTPase family. RHD3 subfamily.

Its subcellular location is the endoplasmic reticulum membrane. In terms of biological role, cooperates with the reticulon proteins and tubule-shaping DP1 family proteins to generate and maintain the structure of the tubular endoplasmic reticulum network. Has GTPase activity, which is required for its function in ER organization. In Coccidioides immitis (strain RS) (Valley fever fungus), this protein is Protein SEY1.